Reading from the N-terminus, the 525-residue chain is Cytochrome P450 CYP72A613 (525 aa).

The helical transmembrane segment at 2-22 (VFLFPTGTIIIWVLTILLAVI) threads the bilayer. C473 is a heme binding site.

The protein belongs to the cytochrome P450 family. As to expression, mainly expressed in leaves and seed pods and, to a lower extent, in flowers and stems.

It localises to the membrane. It participates in steroid metabolism; cholesterol metabolism. Its function is as follows. Involved in the biosynthesis of spiroketal steroid and saponin natural products from cholesterol such as diosgenin and analogs (e.g. furostanol and spirostanol), plant defense compounds used as main precursors for the industrial production of steroid hormones. During the 5,6-spiroketalization of cholesterol, may catalyze the 27-monohydroxylation of furostanol-type steroid to an intermediate product that undergoes a stereospecific formation of the terminal heterocycle to yield diosgenin. This chain is Cytochrome P450 CYP72A613, found in Trigonella foenum-graecum (Fenugreek).